A 140-amino-acid chain; its full sequence is Transcription antitermination protein NusB (140 aa).

The protein belongs to the NusB family.

Functionally, involved in transcription antitermination. Required for transcription of ribosomal RNA (rRNA) genes. Binds specifically to the boxA antiterminator sequence of the ribosomal RNA (rrn) operons. This Streptococcus pneumoniae (strain 70585) protein is Transcription antitermination protein NusB.